The sequence spans 284 residues: MIETAAADILAGGMVPLEMTQTQIFEAVQSDTLLASSLWINIALAGLSILLFVYMGRNVEDPRAQLIFVATLMVPLVSISSYTGLVSGLTVSFLEMPAGHALAGQEVLTPWGRYLTWALSTPMILIAVGLLAGSNTTKLFTAVVADIGMCVTGLAAALTTSSYLLRWVWYAISCAFFVVVLYILLAEWAEDAEIAGTADIFNTLKVLTVVLWLGYPIFWALGAEGLAVLDVAITSWAYSGMDIVAKYLFAFLLLRWVVNNERTVADVASGLGSGSRGGAAPADD.

Residues 1 to 30 are Extracellular-facing; it reads MIETAAADILAGGMVPLEMTQTQIFEAVQS. The helical transmembrane segment at 31-56 threads the bilayer; sequence DTLLASSLWINIALAGLSILLFVYMG. Over 57–62 the chain is Cytoplasmic; sequence RNVEDP. The chain crosses the membrane as a helical span at residues 63–86; sequence RAQLIFVATLMVPLVSISSYTGLV. The Extracellular portion of the chain corresponds to 87–110; the sequence is SGLTVSFLEMPAGHALAGQEVLTP. A helical membrane pass occupies residues 111 to 132; that stretch reads WGRYLTWALSTPMILIAVGLLA. Over 133 to 135 the chain is Cytoplasmic; that stretch reads GSN. Residues 136 to 159 form a helical membrane-spanning segment; it reads TTKLFTAVVADIGMCVTGLAAALT. Residues 160–162 are Extracellular-facing; the sequence is TSS. Residues 163 to 185 traverse the membrane as a helical segment; that stretch reads YLLRWVWYAISCAFFVVVLYILL. Topologically, residues 186–197 are cytoplasmic; it reads AEWAEDAEIAGT. Residues 198–221 traverse the membrane as a helical segment; it reads ADIFNTLKVLTVVLWLGYPIFWAL. Residues 222 to 230 lie on the Extracellular side of the membrane; the sequence is GAEGLAVLD. A helical transmembrane segment spans residues 231-259; it reads VAITSWAYSGMDIVAKYLFAFLLLRWVVN. Lysine 246 carries the N6-(retinylidene)lysine modification. Topologically, residues 260–284 are cytoplasmic; that stretch reads NERTVADVASGLGSGSRGGAAPADD.

The protein belongs to the archaeal/bacterial/fungal opsin family.

The protein resides in the cell membrane. Functionally, light-driven chloride pump. The sequence is that of Halorhodopsin (hop) from Halobacterium sp. (strain SG1).